Consider the following 441-residue polypeptide: N-acetyl-S-(2-succino)cysteine monooxygenase (441 aa).

FMN contacts are provided by Asp59, Thr96, His146, Tyr150, Ser220, and Ser221.

This sequence belongs to the NtaA/SnaA/DszA monooxygenase family. As to quaternary structure, homodimer. It depends on FMN as a cofactor.

It carries out the reaction N-acetyl-S-(2-succino)-L-cysteine + NADH + O2 + H(+) = N-acetyl-L-cysteine + oxaloacetate + NAD(+) + H2O. It functions in the pathway amino-acid biosynthesis; L-cysteine biosynthesis. In terms of biological role, catalyzes the oxidative cleavage of the C-S bond of N-acetyl-S-(2-succino)cysteine, forming oxaloacetate and N-acetylcysteine (NAC). Is involved in a S-(2-succino)cysteine (2SC) degradation pathway that allows B.subtilis to grow on 2SC as a sole sulfur source, via its metabolization to cysteine. Shows almost no activity on S-succinylglutathione and 2SC. This is N-acetyl-S-(2-succino)cysteine monooxygenase from Bacillus subtilis (strain 168).